We begin with the raw amino-acid sequence, 119 residues long: Basic phospholipase A2 notechis II-5 (119 aa).

Cystine bridges form between Cys-11–Cys-71, Cys-27–Cys-118, Cys-29–Cys-45, Cys-44–Cys-99, Cys-51–Cys-92, Cys-60–Cys-85, and Cys-78–Cys-90. Residues Tyr-28, Gly-30, and Gly-32 each coordinate Ca(2+). The active site involves His-48. Asp-49 contacts Ca(2+). The active site involves Asp-93.

The protein belongs to the phospholipase A2 family. Group I subfamily. D49 sub-subfamily. It depends on Ca(2+) as a cofactor. In terms of tissue distribution, expressed by the venom gland.

It localises to the secreted. It carries out the reaction a 1,2-diacyl-sn-glycero-3-phosphocholine + H2O = a 1-acyl-sn-glycero-3-phosphocholine + a fatty acid + H(+). In terms of biological role, snake venom phospholipase A2 (PLA2) that inhibits neuromuscular transmission by blocking acetylcholine release from the nerve termini. Notechis II-5 is less toxic than notexin but has a higher specific phospholipase activity. PLA2 catalyzes the calcium-dependent hydrolysis of the 2-acyl groups in 3-sn-phosphoglycerides. In Notechis scutatus scutatus (Mainland tiger snake), this protein is Basic phospholipase A2 notechis II-5.